Here is a 215-residue protein sequence, read N- to C-terminus: uncharacterized protein (215 aa).

This is an uncharacterized protein from Ostreid herpesvirus 1 (isolate France) (OsHV-1).